A 560-amino-acid chain; its full sequence is ATP synthase subunit beta, mitochondrial (560 aa).

The N-terminal 54 residues, 1 to 54 (MASRRLLASLLRQSAQRGGGLISRSLGNSIPKSASRASSRASPKGFLLNRAVQY), are a transit peptide targeting the mitochondrion. Disordered regions lie at residues 20–44 (GLIS…ASPK) and 58–81 (AAAP…KITD). Low complexity-rich tracts occupy residues 33–42 (SASRASSRAS) and 58–71 (AAAP…PPKS). 235 to 242 (GGAGVGKT) contacts ATP.

It belongs to the ATPase alpha/beta chains family. F-type ATPases have 2 components, CF(1) - the catalytic core - and CF(0) - the membrane proton channel. CF(1) has five subunits: alpha(3), beta(3), gamma(1), delta(1), epsilon(1). CF(0) has three main subunits: a, b and c.

The protein resides in the mitochondrion. It is found in the mitochondrion inner membrane. The enzyme catalyses ATP + H2O + 4 H(+)(in) = ADP + phosphate + 5 H(+)(out). In terms of biological role, mitochondrial membrane ATP synthase (F(1)F(0) ATP synthase or Complex V) produces ATP from ADP in the presence of a proton gradient across the membrane which is generated by electron transport complexes of the respiratory chain. F-type ATPases consist of two structural domains, F(1) - containing the extramembraneous catalytic core, and F(0) - containing the membrane proton channel, linked together by a central stalk and a peripheral stalk. During catalysis, ATP synthesis in the catalytic domain of F(1) is coupled via a rotary mechanism of the central stalk subunits to proton translocation. Subunits alpha and beta form the catalytic core in F(1). Rotation of the central stalk against the surrounding alpha(3)beta(3) subunits leads to hydrolysis of ATP in three separate catalytic sites on the beta subunits. This chain is ATP synthase subunit beta, mitochondrial (ATPB), found in Nicotiana plumbaginifolia (Leadwort-leaved tobacco).